Consider the following 113-residue polypeptide: MLQLTPSAAQEIKRLQHSRQLTRHHFRLAVRPGGCAGWLYHLDFVPEITADDLEYESGGVTVLVDSQSAGYLHNLKLDYAEDLMGGGFRFTNPNAAQVCSCSLSFAPNLEKNL.

The protein belongs to the HesB/IscA family.

This is an uncharacterized protein from Synechocystis sp. (strain ATCC 27184 / PCC 6803 / Kazusa).